Consider the following 166-residue polypeptide: MAPKKAKKRAGGANSNVFSMFEQTQIQEFKEAFTIMDQNRDGFIDKNDLRDTFAALGRVNVKNEEIDEMIKEAPGPINFTVFLTMFGEKLKGADPEETILNAFKVFDPEGKGVLKADYVREMLTTQAERFSKEEVDQMFAAFPPDVTGNLDYKNLVHIITHGEEKD.

A N,N,N-trimethylalanine modification is found at Ala-2. Asn-14 bears the Deamidated asparagine mark. Position 15 is a phosphoserine; by ZIPK/DAPK3 (Ser-15). A Phosphoserine modification is found at Ser-19. 3 EF-hand domains span residues 24-59 (TQIQ…LGRV), 94-129 (DPEE…QAER), and 130-165 (FSKE…GEEK). Asp-37, Asn-39, Asp-41, and Asp-48 together coordinate Ca(2+). Phosphothreonine is present on Thr-52.

Myosin is a hexamer of 2 heavy chains and 4 light chains. Interacts with MYOC. In terms of processing, N-terminus is methylated by METTL11A/NTM1. Post-translationally, phosphorylated by MYLK3 and MYLK2; promotes cardiac muscle contraction and function. Dephosphorylated by PPP1CB complexed to PPP1R12B. The phosphorylated form in adult is expressed as gradients across the heart from endocardium (low phosphorylation) to epicardium (high phosphorylation); regulates cardiac torsion and workload distribution. Highly expressed in type I muscle fibers.

The protein resides in the cytoplasm. The protein localises to the myofibril. It is found in the sarcomere. It localises to the a band. Contractile protein that plays a role in heart development and function. Following phosphorylation, plays a role in cross-bridge cycling kinetics and cardiac muscle contraction by increasing myosin lever arm stiffness and promoting myosin head diffusion; as a consequence of the increase in maximum contraction force and calcium sensitivity of contraction force. These events altogether slow down myosin kinetics and prolong duty cycle resulting in accumulated myosins being cooperatively recruited to actin binding sites to sustain thin filament activation as a means to fine-tune myofilament calcium sensitivity to force. During cardiogenesis plays an early role in cardiac contractility by promoting cardiac myofibril assembly. This Homo sapiens (Human) protein is Myosin regulatory light chain 2, ventricular/cardiac muscle isoform.